A 40-amino-acid chain; its full sequence is 67 kDa serum albumin (40 aa).

One can recognise an Albumin domain in the interval 1–40; it reads DAEHKSEIVHRFNDLKEEKFKGAALITFAQFLHKKPEEEA. His-4 provides a ligand contact to Cu cation.

This sequence belongs to the ALB/AFP/VDB family. In terms of tissue distribution, plasma.

The protein resides in the secreted. Functionally, serum albumin, the main protein of plasma, has a good binding capacity for water, Ca(2+), Na(+), K(+), fatty acids, hormones, bilirubin and drugs. Its main function is the regulation of the colloidal osmotic pressure of blood. The sequence is that of 67 kDa serum albumin from Trachemys scripta (Red-eared slider turtle).